The primary structure comprises 155 residues: Small ribosomal subunit protein bS6 (155 aa).

The tract at residues 94-155 is disordered; the sequence is EKHEEGPSAM…RPRRPREDRV (62 aa).

The protein belongs to the bacterial ribosomal protein bS6 family.

Functionally, binds together with bS18 to 16S ribosomal RNA. The chain is Small ribosomal subunit protein bS6 from Rhizobium leguminosarum bv. trifolii (strain WSM2304).